A 121-amino-acid polypeptide reads, in one-letter code: Small ribosomal subunit protein uS13 (121 aa).

The interval 93 to 121 (RNLPVRGQRTRTNARTCKGPRKSMNKQFK) is disordered. A compositionally biased stretch (basic residues) spans 110–121 (KGPRKSMNKQFK).

Belongs to the universal ribosomal protein uS13 family. In terms of assembly, part of the 30S ribosomal subunit. Forms a loose heterodimer with protein S19. Forms two bridges to the 50S subunit in the 70S ribosome.

In terms of biological role, located at the top of the head of the 30S subunit, it contacts several helices of the 16S rRNA. In the 70S ribosome it contacts the 23S rRNA (bridge B1a) and protein L5 of the 50S subunit (bridge B1b), connecting the 2 subunits; these bridges are implicated in subunit movement. Contacts the tRNAs in the A and P-sites. In Blochmanniella pennsylvanica (strain BPEN), this protein is Small ribosomal subunit protein uS13.